We begin with the raw amino-acid sequence, 267 residues long: Cell division protein FtsQ (267 aa).

Residues 1–32 (MRQKTISNKNKQTKNTNNISLRRKLGLMYKKA) lie on the Cytoplasmic side of the membrane. The chain crosses the membrane as a helical span at residues 33–53 (ILVLKIVLMIFVCLFVFTKYF). Over 54–267 (TSIKTYLITN…DRNKYYIQKY (214 aa)) the chain is Periplasmic. One can recognise a POTRA domain in the interval 73 to 141 (FRLENVIIEG…NTVYIKLFER (69 aa)).

The protein belongs to the FtsQ/DivIB family. FtsQ subfamily.

It localises to the cell inner membrane. Functionally, essential cell division protein. In Rickettsia prowazekii (strain Madrid E), this protein is Cell division protein FtsQ.